Consider the following 82-residue polypeptide: Small ribosomal subunit protein bS16 (82 aa).

It belongs to the bacterial ribosomal protein bS16 family.

The polypeptide is Small ribosomal subunit protein bS16 (Synechocystis sp. (strain ATCC 27184 / PCC 6803 / Kazusa)).